The primary structure comprises 120 residues: Small ribosomal subunit protein bS6 (120 aa).

A compositionally biased stretch (polar residues) spans 97–112 (SNEPSPILKNQSTENT). Positions 97–120 (SNEPSPILKNQSTENTPVIDVTAN) are disordered.

It belongs to the bacterial ribosomal protein bS6 family.

Functionally, binds together with bS18 to 16S ribosomal RNA. This Rickettsia bellii (strain OSU 85-389) protein is Small ribosomal subunit protein bS6.